A 344-amino-acid polypeptide reads, in one-letter code: tRNA N6-adenosine threonylcarbamoyltransferase (344 aa).

Residues His-118 and His-122 each coordinate Fe cation. Substrate is bound by residues 141–145, Asp-174, Gly-187, and Asn-284; that span reads TASGG. Asp-312 contacts Fe cation.

This sequence belongs to the KAE1 / TsaD family. It depends on Fe(2+) as a cofactor.

Its subcellular location is the cytoplasm. It carries out the reaction L-threonylcarbamoyladenylate + adenosine(37) in tRNA = N(6)-L-threonylcarbamoyladenosine(37) in tRNA + AMP + H(+). In terms of biological role, required for the formation of a threonylcarbamoyl group on adenosine at position 37 (t(6)A37) in tRNAs that read codons beginning with adenine. Is involved in the transfer of the threonylcarbamoyl moiety of threonylcarbamoyl-AMP (TC-AMP) to the N6 group of A37, together with TsaE and TsaB. TsaD likely plays a direct catalytic role in this reaction. The sequence is that of tRNA N6-adenosine threonylcarbamoyltransferase from Desulfotalea psychrophila (strain LSv54 / DSM 12343).